Here is a 301-residue protein sequence, read N- to C-terminus: Protoheme IX farnesyltransferase (301 aa).

A run of 9 helical transmembrane segments spans residues 29–49 (VVALMLLTVLVGMCLAVPGVV), 51–71 (IVPLIAGMAGIGMMAGSAAAF), 96–118 (VSIAKALTFSCSLGILGFVVLYV), 123–143 (LTAWLTFASLIGYAVVYTAYL), 151–171 (IVVGGLAGAMPPLLGWTAVTG), 177–197 (ALLLVIIIFAWTPPHFWALAI), 223–243 (CIFLYTILLAIACLLPVLVGM), 244–264 (CGPVYLVSSTLLSVTFIYKAW), and 281–301 (FSIYHLMLLFIALLVDHYLWL).

Belongs to the UbiA prenyltransferase family. Protoheme IX farnesyltransferase subfamily.

It is found in the cell inner membrane. The catalysed reaction is heme b + (2E,6E)-farnesyl diphosphate + H2O = Fe(II)-heme o + diphosphate. Its pathway is porphyrin-containing compound metabolism; heme O biosynthesis; heme O from protoheme: step 1/1. Converts heme B (protoheme IX) to heme O by substitution of the vinyl group on carbon 2 of heme B porphyrin ring with a hydroxyethyl farnesyl side group. The polypeptide is Protoheme IX farnesyltransferase (Shewanella halifaxensis (strain HAW-EB4)).